A 103-amino-acid chain; its full sequence is Large ribosomal subunit protein uL24 (103 aa).

Belongs to the universal ribosomal protein uL24 family. As to quaternary structure, part of the 50S ribosomal subunit.

Its function is as follows. One of two assembly initiator proteins, it binds directly to the 5'-end of the 23S rRNA, where it nucleates assembly of the 50S subunit. Functionally, one of the proteins that surrounds the polypeptide exit tunnel on the outside of the subunit. In Lachnospira eligens (strain ATCC 27750 / DSM 3376 / VPI C15-48 / C15-B4) (Eubacterium eligens), this protein is Large ribosomal subunit protein uL24.